Here is a 472-residue protein sequence, read N- to C-terminus: Pyruvate kinase (472 aa).

R33 is a substrate binding site. K(+) is bound by residues N35, S37, and D67. Residue 35–38 (NFSH) coordinates ATP. ATP is bound by residues R74 and K155. Residue E220 coordinates Mg(2+). 3 residues coordinate substrate: G243, D244, and T276. A Mg(2+)-binding site is contributed by D244.

It belongs to the pyruvate kinase family. Homotetramer. Mg(2+) serves as cofactor. K(+) is required as a cofactor.

It carries out the reaction pyruvate + ATP = phosphoenolpyruvate + ADP + H(+). It functions in the pathway carbohydrate degradation; glycolysis; pyruvate from D-glyceraldehyde 3-phosphate: step 5/5. The polypeptide is Pyruvate kinase (pyk) (Mycobacterium intracellulare).